The following is a 150-amino-acid chain: Large ribosomal subunit protein uL15 (150 aa).

Residues 1–57 (MRLEDIRPQAGSTRRRRRLGRGVSAGQGASCGKGMRGQKARKGGSTRPGFEGGQTPL) are disordered. The segment covering 23–35 (VSAGQGASCGKGM) has biased composition (gly residues).

It belongs to the universal ribosomal protein uL15 family. In terms of assembly, part of the 50S ribosomal subunit.

Binds to the 23S rRNA. This chain is Large ribosomal subunit protein uL15, found in Synechococcus sp. (strain JA-2-3B'a(2-13)) (Cyanobacteria bacterium Yellowstone B-Prime).